A 321-amino-acid polypeptide reads, in one-letter code: Carbonic anhydrase, chloroplastic (321 aa).

Residues 1 to 100 (MSTASINSCL…AAARVDQITA (100 aa)) constitute a chloroplast transit peptide.

The protein belongs to the beta-class carbonic anhydrase family. As to quaternary structure, homohexamer.

It is found in the plastid. The protein resides in the chloroplast stroma. It catalyses the reaction hydrogencarbonate + H(+) = CO2 + H2O. In terms of biological role, reversible hydration of carbon dioxide. This chain is Carbonic anhydrase, chloroplastic, found in Nicotiana tabacum (Common tobacco).